The chain runs to 331 residues: Nucleotide-binding protein SGR_5570 (331 aa).

The segment at 1–43 (MTENTHETAPNTADTDTADFDTADTDRADGAADVSTNTPNETG) is disordered. 55-62 (GMSGAGRS) lines the ATP pocket. 106–109 (DVRG) serves as a coordination point for GTP.

Belongs to the RapZ-like family.

Functionally, displays ATPase and GTPase activities. The chain is Nucleotide-binding protein SGR_5570 from Streptomyces griseus subsp. griseus (strain JCM 4626 / CBS 651.72 / NBRC 13350 / KCC S-0626 / ISP 5235).